The primary structure comprises 457 residues: MPPAGQDDLDFLKYAMESYVADVNADIGKTTIVFTLREKAGALAETLKLFQAHDVNLSHIESRPSKTHEGCYEVLVEFAEAEDHRKIEGVIEHFQQKAEKKVLVQDWNTKNKQNKDSVPWFPQKINDIDQFANRILSYGAELDADHPGFKDMTYRERRKFFADIAFNFKHGDKIPTITYTDEEIATWRTVYNELTVMYPKNACQEFNYIFPLLQQNCGFGPDRIPQLQDVSDFLKDCTGYTIRPVAGLLSSRDFLAGLAFRVFHSTQYIRHHSAPKYTPEPDICHELLGHVPLFADVEFAQFSQEIGLASLGAPDDVIEKLATLYWFTIEFGICQQDGEKKAYGAGLLSSFGELQYALSDKPEVVDFDPAVCCVTKYPITEYQPKYFLAESFASAKNKLKSWAATINRPFQIRYNAYTQRVEILDKVAALQRLARDIRSDISTLEEALGKVNNLKMK.

Positions 31–108 (TIVFTLREKA…EKKVLVQDWN (78 aa)) constitute an ACT domain. Residues H285, H290, and E330 each contribute to the Fe cation site.

Belongs to the biopterin-dependent aromatic amino acid hydroxylase family. As to quaternary structure, homotetramer. The cofactor is Fe(2+). In terms of tissue distribution, expressed in the seam cells of the lateral hypodermis, in the ventral hypodermis and in the hyp7 hypodermal syncytium, in hypodermal cells in the tail and in body wall muscle cells (at protein level).

It localises to the cytoplasm. The enzyme catalyses (6R)-L-erythro-5,6,7,8-tetrahydrobiopterin + L-phenylalanine + O2 = (4aS,6R)-4a-hydroxy-L-erythro-5,6,7,8-tetrahydrobiopterin + L-tyrosine. It carries out the reaction (6R)-L-erythro-5,6,7,8-tetrahydrobiopterin + L-tryptophan + O2 = 5-hydroxy-L-tryptophan + (4aS,6R)-4a-hydroxy-L-erythro-5,6,7,8-tetrahydrobiopterin. The protein operates within amino-acid degradation; L-phenylalanine degradation; acetoacetate and fumarate from L-phenylalanine: step 1/6. With respect to regulation, inhibited by tetrahydrobiopterin. Unlike its mammalian orthologs, pah-1 does not exhibit allosteric binding behavior for phenylalanine. Catalyzes the hydroxylation of L-phenylalanine to L-tyrosine. Catalyzes the hydroxylation of tryptophan to 5-hydroxy-L-tryptophan. Plays a role in the biosynthesis of a melanin-like cuticle pigment. In Caenorhabditis elegans, this protein is Phenylalanine-4-hydroxylase.